A 431-amino-acid polypeptide reads, in one-letter code: Serine/threonine-protein kinase Sgk1 (431 aa).

Residues 1–60 (MTVKTEAAKGTLTYSRMRGMVAILIAFMKQRRMGLNDFIQKIANNSYACKHPEVQSILKI) form a necessary for localization to the mitochondria region. The disordered stretch occupies residues 66-92 (PELMNANPSPPPSPSQQINLGPSSNPH). Phosphoserine is present on Ser-74. Ser-78 carries the post-translational modification Phosphoserine; by MAPK7. Over residues 81-91 (QQINLGPSSNP) the composition is skewed to polar residues. Positions 98–355 (FHFLKVIGKG…FMEIKSHVFF (258 aa)) constitute a Protein kinase domain. Residues 104–112 (IGKGSFGKV) and Lys-127 contribute to the ATP site. The Nuclear localization signal motif lies at 131 to 141 (KKAILKKKEEK). Asp-222 functions as the Proton acceptor in the catalytic mechanism. A Phosphothreonine; by PDPK1 modification is found at Thr-256. The 76-residue stretch at 356-431 (SLINWDDLIN…SYAPPTDSFL (76 aa)) folds into the AGC-kinase C-terminal domain. Position 369 is a phosphothreonine; by PKA (Thr-369). 3 positions are modified to phosphoserine: Ser-397, Ser-401, and Ser-422.

It belongs to the protein kinase superfamily. AGC Ser/Thr protein kinase family. In terms of assembly, homodimer; disulfide-linked. Forms a trimeric complex with FBXW7 and NOTCH1. Interacts with MAPK3/ERK1, MAPK1/ERK2, MAP2K1/MEK1, MAP2K2/MEK2, NEDD4, NEDD4L, MAPT/TAU, MAPK7, CREB1, SLC9A3R2/NHERF2 and KCNJ1/ROMK1. Associates with the mammalian target of rapamycin complex 2 (mTORC2) via an interaction with MAPKAP1/SIN1. Post-translationally, regulated by phosphorylation. Activated by phosphorylation on Ser-422 by mTORC2, transforming it into a substrate for PDPK1 which phosphorylates it on Thr-256. Phosphorylation on Ser-397 and Ser-401 are also essential for its activity. Phosphorylation on Ser-78 by MAPK7 is required for growth factor-induced cell cycle progression. Ubiquitinated by NEDD4L; which promotes proteasomal degradation. Ubiquitinated by SYVN1 at the endoplasmic reticulum; which promotes rapid proteasomal degradation and maintains a high turnover rate in resting cells.

The protein localises to the cytoplasm. It localises to the nucleus. The protein resides in the endoplasmic reticulum membrane. It is found in the cell membrane. Its subcellular location is the mitochondrion. It carries out the reaction L-seryl-[protein] + ATP = O-phospho-L-seryl-[protein] + ADP + H(+). The enzyme catalyses L-threonyl-[protein] + ATP = O-phospho-L-threonyl-[protein] + ADP + H(+). Its activity is regulated as follows. Two specific sites, one in the kinase domain (Thr-256) and the other in the C-terminal regulatory region (Ser-422), need to be phosphorylated for its full activation. Phosphorylation at Ser-397 and Ser-401 are also essential for its activity. Activated by WNK1, WNK2, WNK3 and WNK4; which promote phosphorylation by mTORC2. Serine/threonine-protein kinase which is involved in the regulation of a wide variety of ion channels, membrane transporters, cellular enzymes, transcription factors, neuronal excitability, cell growth, proliferation, survival, migration and apoptosis. Plays an important role in cellular stress response. Contributes to regulation of renal Na(+) retention, renal K(+) elimination, salt appetite, gastric acid secretion, intestinal Na(+)/H(+) exchange and nutrient transport, insulin-dependent salt sensitivity of blood pressure, salt sensitivity of peripheral glucose uptake, cardiac repolarization and memory consolidation. Up-regulates Na(+) channels: SCNN1A/ENAC, SCN5A and ASIC1/ACCN2, K(+) channels: KCNJ1/ROMK1, KCNA1-5, KCNQ1-5 and KCNE1, epithelial Ca(2+) channels: TRPV5 and TRPV6, chloride channels: BSND, CLCN2 and CFTR, glutamate transporters: SLC1A3/EAAT1, SLC1A2 /EAAT2, SLC1A1/EAAT3, SLC1A6/EAAT4 and SLC1A7/EAAT5, amino acid transporters: SLC1A5/ASCT2, SLC38A1/SN1 and SLC6A19, creatine transporter: SLC6A8, Na(+)/dicarboxylate cotransporter: SLC13A2/NADC1, Na(+)-dependent phosphate cotransporter: SLC34A2/NAPI-2B, glutamate receptor: GRIK2/GLUR6. Up-regulates carriers: SLC9A3/NHE3, SLC12A1/NKCC2, SLC12A3/NCC, SLC5A3/SMIT, SLC2A1/GLUT1, SLC5A1/SGLT1 and SLC15A2/PEPT2. Regulates enzymes: GSK3A/B, PMM2 and Na(+)/K(+) ATPase, and transcription factors: CTNNB1 and nuclear factor NF-kappa-B. Stimulates sodium transport into epithelial cells by enhancing the stability and expression of SCNN1A/ENAC. This is achieved by phosphorylating the NEDD4L ubiquitin E3 ligase, promoting its interaction with 14-3-3 proteins, thereby preventing it from binding to SCNN1A/ENAC and targeting it for degradation. Regulates store-operated Ca(+2) entry (SOCE) by stimulating ORAI1 and STIM1. Regulates KCNJ1/ROMK1 directly via its phosphorylation or indirectly via increased interaction with SLC9A3R2/NHERF2. Phosphorylates MDM2 and activates MDM2-dependent ubiquitination of p53/TP53. Phosphorylates MAPT/TAU and mediates microtubule depolymerization and neurite formation in hippocampal neurons. Phosphorylates SLC2A4/GLUT4 and up-regulates its activity. Phosphorylates APBB1/FE65 and promotes its localization to the nucleus. Phosphorylates MAPK1/ERK2 and activates it by enhancing its interaction with MAP2K1/MEK1 and MAP2K2/MEK2. Phosphorylates FBXW7 and plays an inhibitory role in the NOTCH1 signaling. Phosphorylates FOXO1 resulting in its relocalization from the nucleus to the cytoplasm. Phosphorylates FOXO3, promoting its exit from the nucleus and interference with FOXO3-dependent transcription. Phosphorylates BRAF and MAP3K3/MEKK3 and inhibits their activity. Phosphorylates SLC9A3/NHE3 in response to dexamethasone, resulting in its activation and increased localization at the cell membrane. Phosphorylates CREB1. Necessary for vascular remodeling during angiogenesis. In Macaca fascicularis (Crab-eating macaque), this protein is Serine/threonine-protein kinase Sgk1 (SGK1).